Reading from the N-terminus, the 363-residue chain is Probable F-box protein At4g22165 (363 aa).

In terms of domain architecture, F-box spans 7 to 56 (PNTWSELPLDLLNLVFKRLSLVNFQRAKSVCSTRYSVSRQCVPERQIALL).

In Arabidopsis thaliana (Mouse-ear cress), this protein is Probable F-box protein At4g22165.